The sequence spans 67 residues: Conotoxin Cal6.35 (67 aa).

The signal sequence occupies residues 1 to 22 (MKLTCVLIVAVLILTACQVIAA). Cystine bridges form between C43–C53, C46–C59, and C52–C66.

This sequence belongs to the conotoxin O1 superfamily. Expressed by the venom duct.

It is found in the secreted. Probable neurotoxin. This Californiconus californicus (California cone) protein is Conotoxin Cal6.35.